The sequence spans 625 residues: Procollagen galactosyltransferase 2 (625 aa).

The first 26 residues, 1-26 (MAARLATVACALFLLSSALLRLGCRA), serve as a signal peptide directing secretion. Asn-96, Asn-184, Asn-381, and Asn-579 each carry an N-linked (GlcNAc...) asparagine glycan. The disordered stretch occupies residues 597–625 (QGHIRSTAKNTEALPPPTSLDTVPSRDEL). Residues 622 to 625 (RDEL) carry the Prevents secretion from ER motif.

It belongs to the glycosyltransferase 25 family.

It localises to the endoplasmic reticulum lumen. The enzyme catalyses (5R)-5-hydroxy-L-lysyl-[collagen] + UDP-alpha-D-galactose = (5R)-5-O-(beta-D-galactosyl)-5-hydroxy-L-lysyl-[collagen] + UDP + H(+). In terms of biological role, beta-galactosyltransferase that transfers beta-galactose to hydroxylysine residues of collagen. The chain is Procollagen galactosyltransferase 2 (Colgalt2) from Mus musculus (Mouse).